A 214-amino-acid polypeptide reads, in one-letter code: tRNA (guanine-N(7)-)-methyltransferase (214 aa).

Glutamate 44, glutamate 69, aspartate 96, and aspartate 118 together coordinate S-adenosyl-L-methionine. The active site involves aspartate 118. Residues lysine 122, aspartate 154, and 191 to 194 (TEYE) each bind substrate.

Belongs to the class I-like SAM-binding methyltransferase superfamily. TrmB family.

The catalysed reaction is guanosine(46) in tRNA + S-adenosyl-L-methionine = N(7)-methylguanosine(46) in tRNA + S-adenosyl-L-homocysteine. Its pathway is tRNA modification; N(7)-methylguanine-tRNA biosynthesis. Functionally, catalyzes the formation of N(7)-methylguanine at position 46 (m7G46) in tRNA. This Listeria innocua serovar 6a (strain ATCC BAA-680 / CLIP 11262) protein is tRNA (guanine-N(7)-)-methyltransferase.